We begin with the raw amino-acid sequence, 103 residues long: Urease subunit beta (103 aa).

The protein belongs to the urease beta subunit family. Heterotrimer of UreA (gamma), UreB (beta) and UreC (alpha) subunits. Three heterotrimers associate to form the active enzyme.

It is found in the cytoplasm. The enzyme catalyses urea + 2 H2O + H(+) = hydrogencarbonate + 2 NH4(+). The protein operates within nitrogen metabolism; urea degradation; CO(2) and NH(3) from urea (urease route): step 1/1. Ureolysis may allow urea to be employed as a nitrogen source for growth and produces ammonia which may protect from killing at low pH. This chain is Urease subunit beta, found in Streptococcus salivarius (strain 57.I).